We begin with the raw amino-acid sequence, 400 residues long: MALEKIITAPKYKNFTINFGPQHPAAHGVLRLVLEMNGEVVQRSDPHIGLLHRGTEKLIEYKNYLQALPYFDRLDYVSMMCQEHAYSLAVEKLLNISKDIPLRAQYIRVLFSEITRILNHLLAVTCHAMDVGALTPFLWGFEEREKLMEFYERVSGARMHAAYIRPGGVALDLPLGLCEDIYKFSKQFASRIDEIEEMLTSNRIWKQRLVDVGVVSAEQALDWSFSGVLLRGSGIAWDLRKTQPYEVYDRMKFNIPVGTRGDCYDRYLIRVQEMRESLRIVMQTINEMSKGIIRLDDRKITPPTRDQMKQSMESLIHHFKFYTGGFVVPAGETYTAVEAPKGEFGVYLVSNGTSKPYRCKIRAPGFAHLQGLDFMARNHMLADVVTIIGTQDIVFGEVDR.

Belongs to the complex I 49 kDa subunit family.

It localises to the mitochondrion. The enzyme catalyses a ubiquinone + NADH + 5 H(+)(in) = a ubiquinol + NAD(+) + 4 H(+)(out). Core subunit of the mitochondrial membrane respiratory chain NADH dehydrogenase (Complex I) that is believed to belong to the minimal assembly required for catalysis. Complex I functions in the transfer of electrons from NADH to the respiratory chain. The immediate electron acceptor for the enzyme is believed to be ubiquinone. Component of the iron-sulfur (IP) fragment of the enzyme. Component of the iron-sulfur (IP) fragment of the enzyme. The protein is NADH-ubiquinone oxidoreductase 49 kDa subunit (NAD7) of Prototheca wickerhamii.